We begin with the raw amino-acid sequence, 223 residues long: Urease accessory protein UreF (223 aa).

Belongs to the UreF family. As to quaternary structure, ureD, UreF and UreG form a complex that acts as a GTP-hydrolysis-dependent molecular chaperone, activating the urease apoprotein by helping to assemble the nickel containing metallocenter of UreC. The UreE protein probably delivers the nickel.

The protein resides in the cytoplasm. Required for maturation of urease via the functional incorporation of the urease nickel metallocenter. The sequence is that of Urease accessory protein UreF from Pseudomonas aeruginosa (strain LESB58).